Here is a 115-residue protein sequence, read N- to C-terminus: NADH-ubiquinone oxidoreductase chain 3 (115 aa).

3 helical membrane passes run 4-24 (FIVL…AFWL), 55-75 (FFLV…LLPL), and 87-107 (TMLT…YEWL).

The protein belongs to the complex I subunit 3 family. As to quaternary structure, core subunit of respiratory chain NADH dehydrogenase (Complex I) which is composed of 45 different subunits. Interacts with TMEM186. Interacts with TMEM242.

It is found in the mitochondrion inner membrane. It catalyses the reaction a ubiquinone + NADH + 5 H(+)(in) = a ubiquinol + NAD(+) + 4 H(+)(out). Its function is as follows. Core subunit of the mitochondrial membrane respiratory chain NADH dehydrogenase (Complex I) which catalyzes electron transfer from NADH through the respiratory chain, using ubiquinone as an electron acceptor. Essential for the catalytic activity of complex I. This Reithrodontomys megalotis (Western harvest mouse) protein is NADH-ubiquinone oxidoreductase chain 3.